Here is a 120-residue protein sequence, read N- to C-terminus: UPF0102 protein TW312 (120 aa).

The protein belongs to the UPF0102 family.

The protein is UPF0102 protein TW312 of Tropheryma whipplei (strain TW08/27) (Whipple's bacillus).